Reading from the N-terminus, the 230-residue chain is Prolactin-3D1 (230 aa).

A signal peptide spans 1–29; sequence MQLTLTLSRASGMQLFLLVSSLLLWEKVA. 2 disulfide bridges follow: Cys-81-Cys-200 and Cys-217-Cys-225. 2 N-linked (GlcNAc...) asparagine glycosylation sites follow: Asn-109 and Asn-158.

Belongs to the somatotropin/prolactin family.

It is found in the secreted. The chain is Prolactin-3D1 (Prl3d1) from Rattus norvegicus (Rat).